A 309-amino-acid chain; its full sequence is Thiamine-monophosphate kinase (309 aa).

Mg(2+) is bound by residues Asp41 and Asp55. His62 serves as a coordination point for substrate. Positions 83, 128, and 215 each coordinate Mg(2+). Residue 127–128 (GD) coordinates ATP. Ser217 provides a ligand contact to ATP. Position 218 (Asp218) interacts with Mg(2+). Position 268 (Glu268) interacts with substrate.

The protein belongs to the thiamine-monophosphate kinase family.

The enzyme catalyses thiamine phosphate + ATP = thiamine diphosphate + ADP. Its pathway is cofactor biosynthesis; thiamine diphosphate biosynthesis; thiamine diphosphate from thiamine phosphate: step 1/1. Catalyzes the ATP-dependent phosphorylation of thiamine-monophosphate (TMP) to form thiamine-pyrophosphate (TPP), the active form of vitamin B1. The sequence is that of Thiamine-monophosphate kinase from Methanopyrus kandleri (strain AV19 / DSM 6324 / JCM 9639 / NBRC 100938).